The following is a 641-amino-acid chain: Phosphomethylpyrimidine synthase (641 aa).

Residues Asn-221, Met-250, Tyr-279, His-315, 335–337 (SRG), 376–379 (DGLR), and Glu-415 contribute to the substrate site. Residue His-419 coordinates Zn(2+). Tyr-442 contacts substrate. Residue His-483 participates in Zn(2+) binding. Residues Cys-563, Cys-566, and Cys-571 each coordinate [4Fe-4S] cluster.

This sequence belongs to the ThiC family. As to quaternary structure, homodimer. Requires [4Fe-4S] cluster as cofactor.

It carries out the reaction 5-amino-1-(5-phospho-beta-D-ribosyl)imidazole + S-adenosyl-L-methionine = 4-amino-2-methyl-5-(phosphooxymethyl)pyrimidine + CO + 5'-deoxyadenosine + formate + L-methionine + 3 H(+). Its pathway is cofactor biosynthesis; thiamine diphosphate biosynthesis. Its function is as follows. Catalyzes the synthesis of the hydroxymethylpyrimidine phosphate (HMP-P) moiety of thiamine from aminoimidazole ribotide (AIR) in a radical S-adenosyl-L-methionine (SAM)-dependent reaction. This chain is Phosphomethylpyrimidine synthase, found in Rhodopseudomonas palustris (strain BisA53).